The sequence spans 146 residues: uncharacterized protein (146 aa).

The disordered stretch occupies residues 87–121 (SRSHHSTAKSAKSALSSDSGDGSDPDPEPETFPSA). The segment covering 94-106 (AKSAKSALSSDSG) has biased composition (low complexity).

This is an uncharacterized protein from Escherichia coli (strain K12).